A 438-amino-acid polypeptide reads, in one-letter code: Chromosomal replication initiator protein DnaA (438 aa).

Residues M1–Q71 form a domain I, interacts with DnaA modulators region. A domain II region spans residues Q71–T101. The tract at residues T81 to E100 is disordered. The tract at residues P102 to S318 is domain III, AAA+ region. ATP is bound by residues G146, G148, K149, and T150. The domain IV, binds dsDNA stretch occupies residues E319–A438.

Belongs to the DnaA family. As to quaternary structure, oligomerizes as a right-handed, spiral filament on DNA at oriC.

Its subcellular location is the cytoplasm. In terms of biological role, plays an essential role in the initiation and regulation of chromosomal replication. ATP-DnaA binds to the origin of replication (oriC) to initiate formation of the DNA replication initiation complex once per cell cycle. Binds the DnaA box (a 9 base pair repeat at the origin) and separates the double-stranded (ds)DNA. Forms a right-handed helical filament on oriC DNA; dsDNA binds to the exterior of the filament while single-stranded (ss)DNA is stabiized in the filament's interior. The ATP-DnaA-oriC complex binds and stabilizes one strand of the AT-rich DNA unwinding element (DUE), permitting loading of DNA polymerase. After initiation quickly degrades to an ADP-DnaA complex that is not apt for DNA replication. Binds acidic phospholipids. This chain is Chromosomal replication initiator protein DnaA, found in Limosilactobacillus fermentum (strain NBRC 3956 / LMG 18251) (Lactobacillus fermentum).